The chain runs to 464 residues: Argininosuccinate lyase (464 aa).

Belongs to the lyase 1 family. Argininosuccinate lyase subfamily.

It localises to the cytoplasm. The enzyme catalyses 2-(N(omega)-L-arginino)succinate = fumarate + L-arginine. It participates in amino-acid biosynthesis; L-arginine biosynthesis; L-arginine from L-ornithine and carbamoyl phosphate: step 3/3. The chain is Argininosuccinate lyase from Pseudomonas aeruginosa (strain UCBPP-PA14).